The chain runs to 120 residues: Large ribosomal subunit protein bL19 (120 aa).

The protein belongs to the bacterial ribosomal protein bL19 family.

In terms of biological role, this protein is located at the 30S-50S ribosomal subunit interface and may play a role in the structure and function of the aminoacyl-tRNA binding site. The chain is Large ribosomal subunit protein bL19 from Marinomonas sp. (strain MWYL1).